Consider the following 243-residue polypeptide: 2-C-methyl-D-erythritol 4-phosphate cytidylyltransferase (243 aa).

It belongs to the IspD/TarI cytidylyltransferase family. IspD subfamily.

It catalyses the reaction 2-C-methyl-D-erythritol 4-phosphate + CTP + H(+) = 4-CDP-2-C-methyl-D-erythritol + diphosphate. It functions in the pathway isoprenoid biosynthesis; isopentenyl diphosphate biosynthesis via DXP pathway; isopentenyl diphosphate from 1-deoxy-D-xylulose 5-phosphate: step 2/6. Its function is as follows. Catalyzes the formation of 4-diphosphocytidyl-2-C-methyl-D-erythritol from CTP and 2-C-methyl-D-erythritol 4-phosphate (MEP). This is 2-C-methyl-D-erythritol 4-phosphate cytidylyltransferase from Colwellia psychrerythraea (strain 34H / ATCC BAA-681) (Vibrio psychroerythus).